We begin with the raw amino-acid sequence, 57 residues long: Protein translocase subunit SecE (57 aa).

Residues 30 to 50 (LIAGAGIVFVGFLGFLIFAIM) traverse the membrane as a helical segment.

This sequence belongs to the SecE/SEC61-gamma family. As to quaternary structure, component of the Sec protein translocase complex. Heterotrimer consisting of SecY (alpha), SecG (beta) and SecE (gamma) subunits. The heterotrimers can form oligomers, although 1 heterotrimer is thought to be able to translocate proteins. Interacts with the ribosome. May interact with SecDF, and other proteins may be involved.

It is found in the cell membrane. In terms of biological role, essential subunit of the Sec protein translocation channel SecYEG. Clamps together the 2 halves of SecY. May contact the channel plug during translocation. The chain is Protein translocase subunit SecE from Haloquadratum walsbyi (strain DSM 16790 / HBSQ001).